Reading from the N-terminus, the 658-residue chain is Glycogen debranching enzyme (658 aa).

The active-site Nucleophile is the D335. E370 functions as the Proton donor in the catalytic mechanism. A compositionally biased stretch (basic and acidic residues) spans 457 to 468 (NDANGEGNRDGT). The segment at 457-481 (NDANGEGNRDGTDSNFSNNHGTEGL) is disordered.

Belongs to the glycosyl hydrolase 13 family.

It carries out the reaction Hydrolysis of (1-&gt;6)-alpha-D-glucosidic linkages to branches with degrees of polymerization of three or four glucose residues in limit dextrin.. It functions in the pathway glycan degradation; glycogen degradation. In terms of biological role, removes maltotriose and maltotetraose chains that are attached by 1,6-alpha-linkage to the limit dextrin main chain, generating a debranched limit dextrin. The protein is Glycogen debranching enzyme of Pectobacterium atrosepticum (strain SCRI 1043 / ATCC BAA-672) (Erwinia carotovora subsp. atroseptica).